We begin with the raw amino-acid sequence, 166 residues long: Immunity protein RhsIB (166 aa).

In terms of biological role, immunity component of a toxin-immunity protein module, which functions as a cellular contact-dependent growth inhibition (CDI) system. Specifically inhibits its cognate toxin RhsB. Cell contact is necessary for growth inhibition. The protein is Immunity protein RhsIB (rhsIB) of Dickeya dadantii (strain 3937) (Erwinia chrysanthemi (strain 3937)).